Here is a 1114-residue protein sequence, read N- to C-terminus: Lysylphosphatidylglycerol biosynthesis bifunctional protein LysX (1114 aa).

A compositionally biased stretch (basic and acidic residues) spans 1–11 (MSASTETHHAS). Residues 1–26 (MSASTETHHASEAAVPTAPRPRPGLG) form a disordered region. The tract at residues 1–618 (MSASTETHHA…GLHSDGSAPG (618 aa)) is phosphatidylglycerol lysyltransferase. Helical transmembrane passes span 38-58 (IAGLILGVFSVLVFLWSISPV), 77-97 (APDTSLSWALVVALLAAALAS), 101-121 (IAWWLLTIYLVLFLITNVIVS), 126-146 (NVNAMAAAVVQVVLIGILIAA), 164-184 (GVLIVGLAIGTLLGWGLVELF), and 219-239 (FVNTLLGLFGAIALLAAVITL). The interval 619-1114 (EGLAPTATGP…LAFPLAKPRQ (496 aa)) is lysine--tRNA ligase. A DNA-binding region (OB) is located at residues 674–751 (VRIAGRLLRI…LSLLANEWRM (78 aa)). 2 residues coordinate Mg(2+): aspartate 1025 and glutamate 1032.

In the N-terminal section; belongs to the LPG synthetase family. This sequence in the C-terminal section; belongs to the class-II aminoacyl-tRNA synthetase family. Requires Mg(2+) as cofactor.

The protein resides in the cell membrane. It catalyses the reaction tRNA(Lys) + L-lysine + ATP = L-lysyl-tRNA(Lys) + AMP + diphosphate. It carries out the reaction L-lysyl-tRNA(Lys) + a 1,2-diacyl-sn-glycero-3-phospho-(1'-sn-glycerol) = a 1,2-diacyl-sn-glycero-3-phospho-1'-(3'-O-L-lysyl)-sn-glycerol + tRNA(Lys). In terms of biological role, catalyzes the production of L-lysyl-tRNA(Lys)transfer and the transfer of a lysyl group from L-lysyl-tRNA(Lys) to membrane-bound phosphatidylglycerol (PG), which produces lysylphosphatidylglycerol (LPG), one of the components of the bacterial membrane with a positive net charge. LPG synthesis contributes to the resistance to cationic antimicrobial peptides (CAMPs) and likely protects M.tuberculosis against the CAMPs produced by competiting microorganisms (bacteriocins). In fact, the modification of anionic phosphatidylglycerol with positively charged L-lysine results in repulsion of the peptides. This Rhodococcus jostii (strain RHA1) protein is Lysylphosphatidylglycerol biosynthesis bifunctional protein LysX (lysX).